The sequence spans 609 residues: MYLSTVLFPLLALNLGLSHARFVRETLELTWEYGSPNGGTPREMVFTNGEYPGPDLIFDEDDDVEVLVINNLPFNTTVHWHGLEMRETPEADGVPGLTQTPIEPGATFTYRFRAYPAGTFWYHSHYKGLMQDGQVGAMYIRRKPDALRPYAVITEDPRELAEIQYAEDNPYLMLATDWTYLTSAEYHNIEVESGYNVFCVDSLLINGRGSVYCPGYQYLEEVSDDGLTAVLEGTHLTEKGCLQPDLHNVQGDYGPWNLSAVPTEVVFNCTPSSVEPPVIYVDPEFNGWVSLNFIGGAAQKAITFSVDNHPMWVYEVDGQFVEPREVEMVGVYSGARYAVMIKLDQTPGDYAIRIAVNGGDQVMSVYAILSYVNQDWIHRENVPKAAIGPHTDTVGYMNYGGGNTSADVRQLLFTENLPAFGVPPPPPSSEVSTTLRTGMIRVNNSYSWSLGNNVLYEPEMTSSTPLLFEPDPLAVIAPKYALTTENNTWVDIVLEITADPRDLIHPPHPIHKHGNRAYIIGNGVGKFRWENVSAAEAEVPDLFYVNETAALRDTFVTDFFDSRLMDGAWIVIRYFVQDKFPSILHCHIASHQMGGMALALLDGVDVWDS.

The first 20 residues, 1 to 20 (MYLSTVLFPLLALNLGLSHA), serve as a signal peptide directing secretion. A Plastocyanin-like 1 domain is found at 45-141 (VFTNGEYPGP…DGQVGAMYIR (97 aa)). An N-linked (GlcNAc...) asparagine glycan is attached at N75. The Cu cation site is built by H79, H81, H123, and H125. N257 carries N-linked (GlcNAc...) asparagine glycosylation. The 103-residue stretch at 270 to 372 (TPSSVEPPVI…MSVYAILSYV (103 aa)) folds into the Plastocyanin-like 2 domain. N403, N443, and N486 each carry an N-linked (GlcNAc...) asparagine glycan. In terms of domain architecture, Plastocyanin-like 3 spans 463-602 (STPLLFEPDP…MGGMALALLD (140 aa)). The Cu cation site is built by H508, H511, and H513. N-linked (GlcNAc...) asparagine glycans are attached at residues N531 and N546. Cu cation is bound by residues H585, C586, H587, and H591.

Belongs to the multicopper oxidase family. Cu cation serves as cofactor.

It localises to the secreted. The catalysed reaction is 4 hydroquinone + O2 = 4 benzosemiquinone + 2 H2O. Its function is as follows. Required for the conversion of the yellow polyketide pigment synthesized by wA to the conidial green pigment. This chain is Laccase-1 (yA), found in Emericella nidulans (strain FGSC A4 / ATCC 38163 / CBS 112.46 / NRRL 194 / M139) (Aspergillus nidulans).